Here is a 693-residue protein sequence, read N- to C-terminus: Protein FAM13A (693 aa).

Ser-19 bears the Phosphoserine mark. 2 disordered regions span residues Ser-56 to Asp-89 and Arg-136 to Met-233. The span at Gly-69–Thr-78 shows a compositional bias: polar residues. A compositionally biased stretch (low complexity) spans Leu-159–Glu-171. Over residues Glu-184 to His-197 the composition is skewed to basic and acidic residues. Phosphoserine is present on residues Ser-267 and Ser-287. 2 disordered regions span residues Asp-302–Glu-331 and Ile-396–Asp-424. Phosphoserine is present on Ser-397. Thr-402 is subject to Phosphothreonine. Over residues Arg-408–Ser-418 the composition is skewed to polar residues.

Belongs to the FAM13 family. As to quaternary structure, interacts with ANXA2. In terms of tissue distribution, expressed in the mammary gland, with similar levels at all stages of development, including pregnancy, lactation and involution.

In terms of biological role, (Microbial infection) Plays a role in the clearance of Pseudomonas aeruginosa by macrophages. In complex with ANXA2, promotes activation of Rho GTPases following P.aeruginosa infection. This Mus musculus (Mouse) protein is Protein FAM13A (Fam13a).